Here is a 380-residue protein sequence, read N- to C-terminus: Queuine tRNA-ribosyltransferase (380 aa).

Catalysis depends on D96, which acts as the Proton acceptor. Residues 96–100 (DSGGF), D150, Q193, and G220 contribute to the substrate site. An RNA binding region spans residues 251-257 (GVGAPDS). Residue D270 is the Nucleophile of the active site. The segment at 275–279 (TRIAR) is RNA binding; important for wobble base 34 recognition. Residues C308, C310, C313, and H339 each contribute to the Zn(2+) site.

This sequence belongs to the queuine tRNA-ribosyltransferase family. In terms of assembly, homodimer. Within each dimer, one monomer is responsible for RNA recognition and catalysis, while the other monomer binds to the replacement base PreQ1. Zn(2+) serves as cofactor.

The enzyme catalyses 7-aminomethyl-7-carbaguanine + guanosine(34) in tRNA = 7-aminomethyl-7-carbaguanosine(34) in tRNA + guanine. Its pathway is tRNA modification; tRNA-queuosine biosynthesis. In terms of biological role, catalyzes the base-exchange of a guanine (G) residue with the queuine precursor 7-aminomethyl-7-deazaguanine (PreQ1) at position 34 (anticodon wobble position) in tRNAs with GU(N) anticodons (tRNA-Asp, -Asn, -His and -Tyr). Catalysis occurs through a double-displacement mechanism. The nucleophile active site attacks the C1' of nucleotide 34 to detach the guanine base from the RNA, forming a covalent enzyme-RNA intermediate. The proton acceptor active site deprotonates the incoming PreQ1, allowing a nucleophilic attack on the C1' of the ribose to form the product. After dissociation, two additional enzymatic reactions on the tRNA convert PreQ1 to queuine (Q), resulting in the hypermodified nucleoside queuosine (7-(((4,5-cis-dihydroxy-2-cyclopenten-1-yl)amino)methyl)-7-deazaguanosine). The chain is Queuine tRNA-ribosyltransferase from Streptococcus equi subsp. equi (strain 4047).